We begin with the raw amino-acid sequence, 113 residues long: Iron-sulfur cluster insertion protein ErpA (113 aa).

Iron-sulfur cluster-binding residues include C41, C105, and C107.

This sequence belongs to the HesB/IscA family. As to quaternary structure, homodimer. Iron-sulfur cluster is required as a cofactor.

Functionally, required for insertion of 4Fe-4S clusters for at least IspG. The polypeptide is Iron-sulfur cluster insertion protein ErpA (Glaesserella parasuis serovar 5 (strain SH0165) (Haemophilus parasuis)).